The chain runs to 503 residues: MEFSVKSGSPEKQRSACIVVGVFEPRRLSPIAEQLDKISDGYISTLLRRGELEGKVGQTLLLHHVPNVLSERILLIGCGKERELDERQYKQVINKTINTLNDTGSMEAVCFLTELHVKGRNTYWKVRQAVETAKETLYTFDQLKSNKIEPRRPLRKMVFNVPTRRELTSGERAISHGLAIAAGIKAAKDLGNMPPNICNPAYLASQARQLADGYGKTTTTRVIGEQQMKELGMNAYLAVGQGSANESLMSVIEYKGSPDADARPIVLVGKGLTFDAGGISIKPADSMDEMKYDMCGAATVYGVMRMAMELNLPLNIVGVLAGCENMVDGRAFRPGDVLTTLSGQTVEVLNTDAEGRLVLCDALTYVERFEPEVVIDVATLTGACVIALGHHLTGLVSNHNPLAHELIGAAEQAGDRAWRLPLGDEFQEQLESNFADMANIGGRPGGAITAGCFLSRFARKYNWAHLDIAGTAWRSGKAKGATGRPVAMLSQFLLNRTGLNGDE.

Positions 270 and 275 each coordinate Mn(2+). Residue lysine 282 is part of the active site. 3 residues coordinate Mn(2+): aspartate 293, aspartate 352, and glutamate 354. The active site involves arginine 356.

The protein belongs to the peptidase M17 family. The cofactor is Mn(2+).

It localises to the cytoplasm. The catalysed reaction is Release of an N-terminal amino acid, Xaa-|-Yaa-, in which Xaa is preferably Leu, but may be other amino acids including Pro although not Arg or Lys, and Yaa may be Pro. Amino acid amides and methyl esters are also readily hydrolyzed, but rates on arylamides are exceedingly low.. It catalyses the reaction Release of an N-terminal amino acid, preferentially leucine, but not glutamic or aspartic acids.. Presumably involved in the processing and regular turnover of intracellular proteins. Catalyzes the removal of unsubstituted N-terminal amino acids from various peptides. This chain is Probable cytosol aminopeptidase, found in Sodalis glossinidius (strain morsitans).